We begin with the raw amino-acid sequence, 952 residues long: Protein translocase subunit SecA (952 aa).

ATP contacts are provided by residues Gln135, 153 to 157 (GEGKT), and Asp575. Basic and acidic residues predominate over residues 614–624 (RHESRRIDNQL). Disordered regions lie at residues 614–636 (RHESRRIDNQLRGRSGRQGDPGS) and 916–946 (VSAKAATQSTTPAAKEIGRNDPCPCGSGKKY). Zn(2+)-binding residues include Cys938, Cys940, Cys949, and Cys950.

Belongs to the SecA family. In terms of assembly, monomer and homodimer. Part of the essential Sec protein translocation apparatus which comprises SecA, SecYEG and auxiliary proteins SecDF. Other proteins may also be involved. Zn(2+) serves as cofactor.

The protein localises to the cell membrane. Its subcellular location is the cytoplasm. The enzyme catalyses ATP + H2O + cellular proteinSide 1 = ADP + phosphate + cellular proteinSide 2.. In terms of biological role, part of the Sec protein translocase complex. Interacts with the SecYEG preprotein conducting channel. Has a central role in coupling the hydrolysis of ATP to the transfer of proteins into and across the cell membrane, serving as an ATP-driven molecular motor driving the stepwise translocation of polypeptide chains across the membrane. This Dehalococcoides mccartyi (strain ATCC BAA-2100 / JCM 16839 / KCTC 5957 / BAV1) protein is Protein translocase subunit SecA.